The primary structure comprises 287 residues: Survival motor neuron protein (287 aa).

The disordered stretch occupies residues 1 to 28 (MGGGGGGFPEPEDSVLFRRGTGESDDSD). A P1 (binding site for GEMIN2) region spans residues 9–40 (PEPEDSVLFRRGTGESDDSDVWDDTALIKAYD). Residue Thr21 is modified to Phosphothreonine. A phosphoserine mark is found at Ser24 and Ser27. Residue Lys47 forms a Glycyl lysine isopeptide (Lys-Gly) (interchain with G-Cter in SUMO2) linkage. Disordered regions lie at residues 51-86 (KNGD…PSKQ) and 149-221 (NAQE…PPPH). The segment covering 64–77 (GTPKRKSAKNKSQR) has biased composition (basic residues). Residue Thr65 is modified to Phosphothreonine. Residue Thr80 is modified to Phosphothreonine; by PKA. In terms of domain architecture, Tudor spans 86–146 (QWKVGDNCCA…LSPTSEVANI (61 aa)). Residues 92–204 (NCCAIWSEDG…MPRSGLGPGK (113 aa)) are required for interaction with RPP20/POP7. Residues 149–160 (NAQENENESQIS) are compositionally biased toward low complexity. The span at 167–179 (SSRSPLNKPNNIR) shows a compositional bias: polar residues. A Glycyl lysine isopeptide (Lys-Gly) (interchain with G-Cter in SUMO2) cross-link involves residue Lys204. Positions 211–221 (GPPPPPPPPPH) are enriched in pro residues. The tract at residues 234–261 (PPMIPPPPPICPDSLDDADALGSMLISW) is P2 (binding site for SM B). The required for interaction with SYNCRIP stretch occupies residues 273-287 (GFKQSQKEGRYSHFN).

This sequence belongs to the SMN family. In terms of assembly, homooligomer; may form higher order homooligomers in the dimer to octamer range. Part of the core SMN complex that contains SMN1, GEMIN2/SIP1, DDX20/GEMIN3, GEMIN4, GEMIN5, GEMIN6, GEMIN7, GEMIN8 and STRAP/UNRIP. Part of the SMN-Sm complex that contains SMN1, GEMIN2/SIP1, DDX20/GEMIN3, GEMIN4, GEMIN5, GEMIN6, GEMIN7, GEMIN8, STRAP/UNRIP and the Sm proteins SNRPB, SNRPD1, SNRPD2, SNRPD3, SNRPE, SNRPF and SNRPG. Component of an import snRNP complex composed of KPNB1, RNUT1, SMN1 and ZNF259. Interacts with DDX20, FBL, NOLA1, RNUT1, SYNCRIP and with several spliceosomal snRNP core Sm proteins, including SNRPB, SNRPD1, SNRPD2, SNRPD3, SNRPE and ILF3. Interacts with GEMIN2; the interaction is direct. Interacts with GEMIN3; the interaction is direct. Interacts with GEMIN8; the interaction is direct. Interacts with SNRPB; the interaction is direct. Interacts (via Tudor domain) with SNRPD1 (via C-terminus); the interaction is direct. Interacts with SNRPD2; the interaction is direct. Interacts (via Tudor domain) with SNRPD3 (via C-terminus); the interaction is direct. Interacts with SNRPE; the interaction is direct. Interacts with OSTF1, LSM10, LSM11 and RPP20/POP7. Interacts (via C-terminal region) with ZPR1 (via C-terminal region). Interacts (via Tudor domain) with COIL. Interacts with SETX; recruits SETX to POLR2A. Interacts with POLR2A (via the C-terminal domain (CTD)). Interacts with PRMT5. Interacts with XRN2. Interacts (via C-terminus) with FMR1 (via C-terminus); the interaction is direct and occurs in a RNA-independent manner. Interacts (via Tudor domain) with SF3B2 ('Arg-508'-methylated form). Interacts with WRAP53/TCAB1. Interacts (via Tudor domain) with ELAVL4 in an RNA-independent manner; the interaction is required for localization of ELAVL4 to RNA granules. Interacts with FRG1.

It localises to the nucleus. The protein localises to the gem. Its subcellular location is the cajal body. It is found in the cytoplasm. The protein resides in the cytoplasmic granule. It localises to the perikaryon. The protein localises to the cell projection. Its subcellular location is the neuron projection. It is found in the axon. The protein resides in the myofibril. It localises to the sarcomere. The protein localises to the z line. Functionally, the SMN complex catalyzes the assembly of small nuclear ribonucleoproteins (snRNPs), the building blocks of the spliceosome, and thereby plays an important role in the splicing of cellular pre-mRNAs. Most spliceosomal snRNPs contain a common set of Sm proteins SNRPB, SNRPD1, SNRPD2, SNRPD3, SNRPE, SNRPF and SNRPG that assemble in a heptameric protein ring on the Sm site of the small nuclear RNA to form the core snRNP (Sm core). In the cytosol, the Sm proteins SNRPD1, SNRPD2, SNRPE, SNRPF and SNRPG are trapped in an inactive 6S pICln-Sm complex by the chaperone CLNS1A that controls the assembly of the core snRNP. To assemble core snRNPs, the SMN complex accepts the trapped 5Sm proteins from CLNS1A forming an intermediate. Binding of snRNA inside 5Sm ultimately triggers eviction of the SMN complex, thereby allowing binding of SNRPD3 and SNRPB to complete assembly of the core snRNP. Within the SMN complex, SMN1 acts as a structural backbone and together with GEMIN2 it gathers the Sm complex subunits. Ensures the correct splicing of U12 intron-containing genes that may be important for normal motor and proprioceptive neurons development. Also required for resolving RNA-DNA hybrids created by RNA polymerase II, that form R-loop in transcription terminal regions, an important step in proper transcription termination. May also play a role in the metabolism of small nucleolar ribonucleoprotein (snoRNPs). This is Survival motor neuron protein (SMN1) from Bos taurus (Bovine).